Here is a 324-residue protein sequence, read N- to C-terminus: Elongation factor Ts, mitochondrial (324 aa).

The N-terminal 44 residues, 1 to 44 (MSLLRSLRFFPVACTGRSARAVLLQPSQPWLTFHAGPSLSSAAS), are a transit peptide targeting the mitochondrion. 3 positions are modified to N6-succinyllysine: Lys75, Lys132, and Lys191. Ser269 is modified (phosphoserine).

This sequence belongs to the EF-Ts family.

It is found in the mitochondrion. Functionally, associates with the EF-Tu.GDP complex and induces the exchange of GDP to GTP. It remains bound to the aminoacyl-tRNA.EF-Tu.GTP complex up to the GTP hydrolysis stage on the ribosome. The chain is Elongation factor Ts, mitochondrial (Tsfm) from Mus musculus (Mouse).